Consider the following 160-residue polypeptide: Cytochrome b6-f complex subunit 4 (160 aa).

3 consecutive transmembrane segments (helical) span residues 36–56 (LLYI…GLAV), 95–115 (LLGV…PFLE), and 131–151 (TVFL…TLPI).

It belongs to the cytochrome b family. PetD subfamily. The 4 large subunits of the cytochrome b6-f complex are cytochrome b6, subunit IV (17 kDa polypeptide, petD), cytochrome f and the Rieske protein, while the 4 small subunits are petG, petL, petM and petN. The complex functions as a dimer.

Its subcellular location is the plastid. It localises to the chloroplast thylakoid membrane. Component of the cytochrome b6-f complex, which mediates electron transfer between photosystem II (PSII) and photosystem I (PSI), cyclic electron flow around PSI, and state transitions. The protein is Cytochrome b6-f complex subunit 4 of Gossypium barbadense (Sea Island cotton).